Reading from the N-terminus, the 100-residue chain is Elevenin (100 aa).

The first 24 residues, 1-24 (MALSQKALLVLVLSMLLTASDSWA), serve as a signal peptide directing secretion. A disulfide bridge connects residues Cys29 and Cys38. A propeptide spanning residues 44 to 100 (KRGGDSLSVGGSAELDDTLTDPFLKSEEPKEWRELTRLSRVLQTFLSHPTGEMEQHD) is cleaved from the precursor.

It belongs to the elevenin family. In terms of assembly, monomer. In terms of tissue distribution, expressed by the venom duct.

It localises to the secreted. In terms of biological role, may mimic the function of prey elevenin neuropeptide. In vivo, intracranial injection in mice induces hyperactivity. The sequence is that of Elevenin from Conus ammiralis (Admiral cone).